We begin with the raw amino-acid sequence, 416 residues long: WD repeat-containing protein JIP5 (416 aa).

WD repeat units lie at residues 9–48 (PLSS…ENGK), 62–101 (RHKG…VEWK), and 112–151 (GFQV…TEVS). The segment at 149-183 (EVSARPQQTHHPHDDYVSSLTPLPPSETSTSGYSK) is disordered. The span at 166–179 (SSLTPLPPSETSTS) shows a compositional bias: low complexity. WD repeat units follow at residues 214–255 (ISSS…DQDE), 264–308 (DGGE…ISEL), and 309–348 (SHDD…EEGN). Composition is skewed to acidic residues over residues 343 to 359 (SDEE…DIEN) and 374 to 383 (SDEEEDSDDD). Residues 343 to 416 (SDEEGNDDES…VHVMAFKGLD (74 aa)) are disordered. Residues 389 to 400 (KGKRKKRKRGKG) are compositionally biased toward basic residues.

It belongs to the WD repeat WDR55 family.

It is found in the nucleus. The protein resides in the nucleolus. The protein is WD repeat-containing protein JIP5 (JIP5) of Coccidioides immitis (strain RS) (Valley fever fungus).